Consider the following 305-residue polypeptide: Tetraspanin-12 (305 aa).

Topologically, residues 1 to 12 are cytoplasmic; it reads MAREDSVKCLRC. 2 S-palmitoyl cysteine lipidation sites follow: cysteine 9 and cysteine 12. Residues 13-33 form a helical membrane-spanning segment; sequence LLYALNLLFWLMSISVLAVSA. The Extracellular portion of the chain corresponds to 34 to 59; it reads WMRDYLNNVLTLTAETRVEEAVILTY. Residues 60–80 form a helical membrane-spanning segment; it reads FPVVHPVMIAVCCFLIIVGML. Residue cysteine 83 is the site of S-palmitoyl cysteine attachment. Residues 90–110 traverse the membrane as a helical segment; sequence LLLLAWYFGTLLVIFCVELAC. Residues 111 to 224 are Extracellular-facing; it reads GVWTYEQEVM…RGTKQLQVLR (114 aa). Residues 225 to 245 form a helical membrane-spanning segment; it reads FLGISIGVTQILAMILTITLL. Residues 246–305 lie on the Cytoplasmic side of the membrane; that stretch reads WALYYDRREPGTDQMLSLKNDASQHLSCHSVELLKPSLSRIFEHTSMANSFNTHFEMEEL.

The protein belongs to the tetraspanin (TM4SF) family. Component of a complex, at least composed of TSPAN12, FZD4 and norrin (NDP). Interacts (when palmitoylated) with ADAM10. Interacts with MMP14/MT1-MMP. In terms of processing, palmitoylated; required for interaction with ADAM10. The precise position of palmitoylated residues is unclear and occurs either on Cys-9, Cys-12 and/or Cys-83.

The protein localises to the cell membrane. Functionally, regulator of cell surface receptor signal transduction. Plays a central role in retinal vascularization by regulating norrin (NDP) signal transduction. Acts in concert with norrin (NDP) to promote FZD4 multimerization and subsequent activation of FZD4, leading to promote accumulation of beta-catenin (CTNNB1) and stimulate LEF/TCF-mediated transcriptional programs. Suprisingly, it only activates the norrin (NDP)-dependent activation of FZD4, while it does not activate the Wnt-dependent activation of FZD4, suggesting the existence of a Wnt-independent signaling that also promote accumulation the beta-catenin (CTNNB1). Acts as a regulator of membrane proteinases such as ADAM10 and MMP14/MT1-MMP. Activates ADAM10-dependent cleavage activity of amyloid precursor protein (APP). Activates MMP14/MT1-MMP-dependent cleavage activity. The sequence is that of Tetraspanin-12 (Tspan12) from Rattus norvegicus (Rat).